The following is a 993-amino-acid chain: Type II inositol 1,4,5-trisphosphate 5-phosphatase (993 aa).

In terms of domain architecture, PH spans 22-148 (QGVLCKGDSR…PEFEWLSRHT (127 aa)). 2 stretches are compositionally biased toward basic and acidic residues: residues 149-163 (CAEP…REWN) and 294-303 (SKSDMSEKVR). Disordered stretches follow at residues 149 to 191 (CAEP…GLED) and 236 to 304 (EALE…KVRS). Residues 342–668 (IQNFRFFVGT…LDKMENANIP (327 aa)) are 5-phosphatase. Positions 355 and 383 each coordinate Mg(2+). Substrate is bound by residues glutamate 383, 459-460 (NK), 582-583 (YK), and 596-598 (KCR). An ASH region spans residues 669-782 (SVTLSKREFC…LSVSGNYLPS (114 aa)). The region spanning 821–993 (SQLENPMEIP…FIHQFLCGPL (173 aa)) is the Rho-GAP domain. Position 990 is a cysteine methyl ester (cysteine 990). The S-farnesyl cysteine moiety is linked to residue cysteine 990. Positions 991–993 (GPL) are cleaved as a propeptide — removed in mature form.

Belongs to the inositol 1,4,5-trisphosphate 5-phosphatase type II family. In terms of assembly, interacts with APPL1, PHETA1 and PHETA2. Interacts with several Rab GTPases, at least RAB1A, RAB2A, RAB5A, RAB6A, RAB8A, RAB9A and RAB33B; these interactions may play a dual role in targeting INPP5B to the specific membranes and stimulating its phosphatase activity. Interacts preferentially with non-phosphorylated RAB8A; phosphorylation of RAB8A on 'Thr-72' disrupts this interaction. Interacts with INPP5F. Post-translationally, isoprenylation at Cys-990 may be required for localization at the membrane. May be proteolytically cleaved after Lys-320 as inferred from N-terminal protein sequence of the 75 kda form. In terms of tissue distribution, detected in kidney, liver, brain, lung and testis (at protein level). Detected in kidney and liver, and at lower levels in brain, lung and testis.

The protein localises to the cytoplasm. It localises to the cytosol. The protein resides in the endoplasmic reticulum-Golgi intermediate compartment. It is found in the early endosome membrane. Its subcellular location is the membrane. The protein localises to the cytoplasmic vesicle. It localises to the phagosome membrane. The catalysed reaction is a 1,2-diacyl-sn-glycero-3-phospho-(1D-myo-inositol-4,5-bisphosphate) + H2O = a 1,2-diacyl-sn-glycero-3-phospho-(1D-myo-inositol 4-phosphate) + phosphate. Its function is as follows. Hydrolyzes phosphatidylinositol 4,5-bisphosphate (PtIns(4,5)P2) and the signaling molecule phosphatidylinositol 1,4,5-trisphosphate (PtIns(1,4,5)P3), and thereby modulates cellular signaling events. This is Type II inositol 1,4,5-trisphosphate 5-phosphatase (Inpp5b) from Mus musculus (Mouse).